We begin with the raw amino-acid sequence, 83 residues long: Kappa-theraphotoxin-Cg2a (83 aa).

An N-terminal signal peptide occupies residues 1–21 (MKGSAFAIILGLVVLCACSFA). Residues 22 to 53 (EDEQDQFASPNELLRSMFLESRHELIPEVEGR) constitute a propeptide that is removed on maturation. Disulfide bonds link Cys55–Cys69, Cys62–Cys74, and Cys68–Cys78. Position 82 is a leucine amide (Leu82).

The protein belongs to the neurotoxin 30 (phrixotoxin) family. As to expression, expressed by the venom gland.

It is found in the secreted. Its function is as follows. Inhibits voltage-gated potassium channels of the subtype Kv4.1/KCND1 with high affinity and shows weak effects on Kv4.2/KCND2 and Kv2.1/KCNB1 subtypes. The toxin modifies the gating behavior of the channel and may interact with the S3-S4 extracellular loop. This is Kappa-theraphotoxin-Cg2a from Chilobrachys guangxiensis (Chinese earth tiger tarantula).